The chain runs to 228 residues: Probable ribosomal RNA small subunit methyltransferase A (228 aa).

The S-adenosyl-L-methionine site is built by His9, Leu11, Gly34, Glu55, Asp78, and Asn93.

This sequence belongs to the class I-like SAM-binding methyltransferase superfamily. rRNA adenine N(6)-methyltransferase family. RsmA subfamily.

The protein resides in the cytoplasm. Functionally, specifically dimethylates two adjacent adenosines in the loop of a conserved hairpin near the 3'-end of 16S rRNA in the 30S particle. May play a critical role in biogenesis of 30S subunits. The protein is Probable ribosomal RNA small subunit methyltransferase A of Pyrobaculum aerophilum (strain ATCC 51768 / DSM 7523 / JCM 9630 / CIP 104966 / NBRC 100827 / IM2).